The primary structure comprises 165 residues: MTTRKPEELEGVTLLGNQGTNYLFDYAPQVLETFPNKHTNRDYFVKFNCPEFTSLCPQTGQPDFATVYISYIPNEIMVESKSLKLYLFSFRNHGDFHEDCMNIIMNDLIELMDPRYIEVWGKFTPRGGISIDPYTNYGKPGTKYEEMASYRMMNHDMYPETIDNR.

The Thioimide intermediate role is filled by Cys56. Asp63 functions as the Proton donor in the catalytic mechanism. Residues 78–80 (VES) and 97–98 (HE) each bind substrate.

It belongs to the GTP cyclohydrolase I family. QueF type 1 subfamily.

It is found in the cytoplasm. It carries out the reaction 7-aminomethyl-7-carbaguanine + 2 NADP(+) = 7-cyano-7-deazaguanine + 2 NADPH + 3 H(+). Its pathway is tRNA modification; tRNA-queuosine biosynthesis. Catalyzes the NADPH-dependent reduction of 7-cyano-7-deazaguanine (preQ0) to 7-aminomethyl-7-deazaguanine (preQ1). This Bacillus pumilus (strain SAFR-032) protein is NADPH-dependent 7-cyano-7-deazaguanine reductase.